A 220-amino-acid chain; its full sequence is NADH-quinone oxidoreductase subunit B (220 aa).

[4Fe-4S] cluster contacts are provided by cysteine 37, cysteine 38, cysteine 103, and cysteine 132. Residues 174–220 form a disordered region; that stretch reads PSSERYAPKNRSQRKLAERQQAAQRREMGAEKPLGALEERAELNAGR. Over residues 210–220 the composition is skewed to basic and acidic residues; sequence LEERAELNAGR.

This sequence belongs to the complex I 20 kDa subunit family. In terms of assembly, NDH-1 is composed of 14 different subunits. Subunits NuoB, C, D, E, F, and G constitute the peripheral sector of the complex. It depends on [4Fe-4S] cluster as a cofactor.

The protein resides in the cell membrane. The catalysed reaction is a quinone + NADH + 5 H(+)(in) = a quinol + NAD(+) + 4 H(+)(out). Functionally, NDH-1 shuttles electrons from NADH, via FMN and iron-sulfur (Fe-S) centers, to quinones in the respiratory chain. The immediate electron acceptor for the enzyme in this species is believed to be a menaquinone. Couples the redox reaction to proton translocation (for every two electrons transferred, four hydrogen ions are translocated across the cytoplasmic membrane), and thus conserves the redox energy in a proton gradient. The sequence is that of NADH-quinone oxidoreductase subunit B from Saccharopolyspora erythraea (strain ATCC 11635 / DSM 40517 / JCM 4748 / NBRC 13426 / NCIMB 8594 / NRRL 2338).